Here is a 311-residue protein sequence, read N- to C-terminus: Aspartate carbamoyltransferase catalytic subunit (311 aa).

Residues Arg-55 and Thr-56 each coordinate carbamoyl phosphate. Residue Lys-85 coordinates L-aspartate. Carbamoyl phosphate-binding residues include Arg-106, His-135, and Gln-138. 2 residues coordinate L-aspartate: Arg-168 and Arg-230. Carbamoyl phosphate contacts are provided by Leu-268 and Pro-269.

Belongs to the aspartate/ornithine carbamoyltransferase superfamily. ATCase family. As to quaternary structure, heterododecamer (2C3:3R2) of six catalytic PyrB chains organized as two trimers (C3), and six regulatory PyrI chains organized as three dimers (R2).

The catalysed reaction is carbamoyl phosphate + L-aspartate = N-carbamoyl-L-aspartate + phosphate + H(+). Its pathway is pyrimidine metabolism; UMP biosynthesis via de novo pathway; (S)-dihydroorotate from bicarbonate: step 2/3. In terms of biological role, catalyzes the condensation of carbamoyl phosphate and aspartate to form carbamoyl aspartate and inorganic phosphate, the committed step in the de novo pyrimidine nucleotide biosynthesis pathway. This chain is Aspartate carbamoyltransferase catalytic subunit, found in Escherichia coli O139:H28 (strain E24377A / ETEC).